The following is a 261-amino-acid chain: Fructoselysine 6-kinase (261 aa).

Belongs to the carbohydrate kinase PfkB family. As to quaternary structure, monomer.

The enzyme catalyses N(6)-(D-fructosyl)-L-lysine + ATP = N(6)-(6-phospho-D-fructosyl)-L-lysine + ADP + H(+). Its pathway is carbohydrate metabolism; fructoselysine degradation; D-glucose 6-phosphate and lysine from fructoselysine: step 1/2. Catalyzes the ATP-dependent phosphorylation of fructoselysine to fructoselysine 6-phosphate. Functions in a fructoselysine degradation pathway that allows E.coli to grow on fructoselysine or psicoselysine. To a much lesser extenst, is also able to phosphorylate psicoselysine. The polypeptide is Fructoselysine 6-kinase (Escherichia coli (strain K12)).